A 617-amino-acid polypeptide reads, in one-letter code: Elongation factor 4 (617 aa).

Residues 17 to 198 (AIIRNFCIIA…KIVRDLPAPV (182 aa)) enclose the tr-type G domain. Residues 29-34 (DHGKST) and 145-148 (NKID) each bind GTP.

This sequence belongs to the TRAFAC class translation factor GTPase superfamily. Classic translation factor GTPase family. LepA subfamily.

It is found in the cell membrane. It carries out the reaction GTP + H2O = GDP + phosphate + H(+). Its function is as follows. Required for accurate and efficient protein synthesis under certain stress conditions. May act as a fidelity factor of the translation reaction, by catalyzing a one-codon backward translocation of tRNAs on improperly translocated ribosomes. Back-translocation proceeds from a post-translocation (POST) complex to a pre-translocation (PRE) complex, thus giving elongation factor G a second chance to translocate the tRNAs correctly. Binds to ribosomes in a GTP-dependent manner. This Paenarthrobacter aurescens (strain TC1) protein is Elongation factor 4.